A 245-amino-acid chain; its full sequence is tRNA pseudouridine synthase A (245 aa).

The Nucleophile role is filled by aspartate 52. Tyrosine 111 lines the substrate pocket.

Belongs to the tRNA pseudouridine synthase TruA family. As to quaternary structure, homodimer.

It carries out the reaction uridine(38/39/40) in tRNA = pseudouridine(38/39/40) in tRNA. In terms of biological role, formation of pseudouridine at positions 38, 39 and 40 in the anticodon stem and loop of transfer RNAs. In Rickettsia felis (strain ATCC VR-1525 / URRWXCal2) (Rickettsia azadi), this protein is tRNA pseudouridine synthase A.